Reading from the N-terminus, the 732-residue chain is Zinc/cadmium/lead-transporting P-type ATPase (732 aa).

At 1-124 (MSTPDNHGKK…QAAEEPQASR (124 aa)) the chain is on the cytoplasmic side. Residues 48–112 (TRYSWKVSGM…ALQKAGYSLR (65 aa)) form the HMA domain. Positions 58, 59, and 62 each coordinate Zn(2+). Residues 125–145 (LKENLPLITLIVMMAISWGLE) traverse the membrane as a helical segment. Residue Gln146 is a topological domain, periplasmic. The chain crosses the membrane as a helical span at residues 147–167 (FNHPFGQLAFIATTLVGLYPI). Over 168–179 (ARQALRLIKSGS) the chain is Cytoplasmic. Residues 180–197 (YFAIETLMSVAAIGALFI) form a helical membrane-spanning segment. The Periplasmic portion of the chain corresponds to 198-202 (GATAE). The chain crosses the membrane as a helical span at residues 203-222 (AAMVLLLFLIGERLEGWAAS). Residues 223–356 (RARQGVSALM…IDRFSRIYTP (134 aa)) lie on the Cytoplasmic side of the membrane. The helical transmembrane segment at 357-377 (AIMAVALLVTLVPPLLFAASW) threads the bilayer. Residues 378–383 (QEWIYK) lie on the Periplasmic side of the membrane. A helical membrane pass occupies residues 384 to 404 (GLTLLLIGCPCALVISTPAAI). Zn(2+) contacts are provided by Cys392 and Cys394. Over 405–685 (TSGLAAAARR…RATHANIRQN (281 aa)) the chain is Cytoplasmic. The active-site 4-aspartylphosphate intermediate is the Asp436. Mg(2+)-binding residues include Asp436, Thr438, and Asp628. A helical membrane pass occupies residues 686–702 (ITIALGLKGIFLVTTLL). The Periplasmic segment spans residues 703–707 (GMTGL). The chain crosses the membrane as a helical span at residues 708-729 (WLAVLADTGATVLVTANALRLL). Residue Asp714 coordinates Zn(2+). At 730–732 (RRR) the chain is on the cytoplasmic side.

It belongs to the cation transport ATPase (P-type) (TC 3.A.3) family. Type IB subfamily.

The protein resides in the cell inner membrane. It catalyses the reaction Pb(2+)(in) + ATP + H2O = Pb(2+)(out) + ADP + phosphate + H(+). The catalysed reaction is Zn(2+)(in) + ATP + H2O = Zn(2+)(out) + ADP + phosphate + H(+). It carries out the reaction Cd(2+)(in) + ATP + H2O = Cd(2+)(out) + ADP + phosphate + H(+). Inhibited by orthovanadate. Its function is as follows. Confers resistance to zinc, cadmium and lead. Couples the hydrolysis of ATP with the export of zinc, cadmium or lead, with highest activity when the metals are present as metal-thiolate complexes. Can also bind nickel, copper, cobalt and mercury. The sequence is that of Zinc/cadmium/lead-transporting P-type ATPase from Escherichia coli (strain K12).